Here is a 391-residue protein sequence, read N- to C-terminus: Alanine racemase (391 aa).

Lys-46 serves as the catalytic Proton acceptor; specific for D-alanine. Lys-46 is modified (N6-(pyridoxal phosphate)lysine). Arg-148 serves as a coordination point for substrate. The active-site Proton acceptor; specific for L-alanine is the Tyr-283. Met-331 is a binding site for substrate.

The protein belongs to the alanine racemase family. It depends on pyridoxal 5'-phosphate as a cofactor.

It catalyses the reaction L-alanine = D-alanine. Its pathway is amino-acid biosynthesis; D-alanine biosynthesis; D-alanine from L-alanine: step 1/1. In terms of biological role, catalyzes the interconversion of L-alanine and D-alanine. May also act on other amino acids. The polypeptide is Alanine racemase (alr) (Streptomyces coelicolor (strain ATCC BAA-471 / A3(2) / M145)).